The following is a 152-amino-acid chain: MALYEHVFLARQDISAQQVDALVEQYKGVIEANGGKVGRIENWGLKSLTYRIKKNRKAHYALMDIDAPPAAIQEMERQMRISEDVLRYMTIAVEKHEEGPSAMLQKRDRDDRGPREGGDRGPRREFGDRPPRRDGDFQRGPRPDRAPREDRA.

Positions 96–152 (HEEGPSAMLQKRDRDDRGPREGGDRGPRREFGDRPPRRDGDFQRGPRPDRAPREDRA) are disordered.

The protein belongs to the bacterial ribosomal protein bS6 family.

Functionally, binds together with bS18 to 16S ribosomal RNA. The sequence is that of Small ribosomal subunit protein bS6 from Rhizobium etli (strain ATCC 51251 / DSM 11541 / JCM 21823 / NBRC 15573 / CFN 42).